The following is a 401-amino-acid chain: Inositol phosphorylceramide synthase catalytic subunit AUR1 (401 aa).

At 1 to 41 (MANPFSRWFLSERPPNCHVADLETSLDPHQTLLKVQKYKPA) the chain is on the cytoplasmic side. The chain crosses the membrane as a helical span at residues 42-62 (LSDWVHYIFLGSIMLFVFITN). The Lumenal portion of the chain corresponds to 63–64 (PA). The helical transmembrane segment at 65–85 (PWIFKILFYCFLGTLFIIPAT) threads the bilayer. Over 86–87 (SQ) the chain is Cytoplasmic. Residues 88–108 (FFFNALPILTWVALYFTSSYF) form a helical membrane-spanning segment. Residues 109-155 (PDDRRPPITVKVLPAVETILYGDNLSDILATSTNSFLDILAWLPYGL) are Lumenal-facing. The N-linked (GlcNAc...) asparagine glycan is linked to Asn132. The helical transmembrane segment at 156–176 (FHFGAPFVVAAILFVFGPPTV) threads the bilayer. At 177–178 (LQ) the chain is on the cytoplasmic side. The helical transmembrane segment at 179–199 (GYAFAFGYMNLFGVIMQNVFP) threads the bilayer. Topologically, residues 200 to 245 (AAPPWYKILYGLQSANYDMHGSPGGLARIDKLLGINMYTTAFSNSS) are lumenal. A helical transmembrane segment spans residues 246–266 (VIFGAFPSLHSGCATMEALFF). At 267 to 268 (CY) the chain is on the cytoplasmic side. A helical transmembrane segment spans residues 269-289 (CFPKLKPLFIAYVCWLWWSTM). Over 290 to 291 (YL) the chain is Lumenal. Residues 292–312 (THHYFVDLMAGSVLSYVIFQY) traverse the membrane as a helical segment. The Cytoplasmic portion of the chain corresponds to 313 to 401 (TKYTHLPIVD…SITSLGVKRA (89 aa)). Residues 374–401 (VSPSLFDGSTSVSRSSATSITSLGVKRA) are disordered. Residues 382–395 (STSVSRSSATSITS) are compositionally biased toward low complexity. Phosphoserine is present on residues Ser392 and Ser395.

Belongs to the AUR1 family. Component of the inositol phosphorylceramide synthase complex composed of at least AUR1 and KEI1.

Its subcellular location is the golgi apparatus. The protein localises to the golgi stack membrane. It catalyses the reaction an N-(2R-hydroxy-very-long-chain fatty acyl)-(R)-4-hydroxysphingoid base + a 1,2-diacyl-sn-glycero-3-phospho-(1D-myo-inositol) = a 1D-myo-inositol-1-phospho-N-[(R)-2-hydroxy-very-long-chain fatty acyl]-(R)-4-hydroxysphingoid base + a 1,2-diacyl-sn-glycerol. With respect to regulation, inhibited by aureobasidin A (AbA), khafrefungin and rustmicin. Functionally, catalytic component of the inositol phosphorylceramide synthase which catalyzes the addition of a phosphorylinositol group onto ceramide to form inositol phosphorylceramide, an essential step in sphingolipid biosynthesis. This Saccharomyces cerevisiae (strain ATCC 204508 / S288c) (Baker's yeast) protein is Inositol phosphorylceramide synthase catalytic subunit AUR1.